We begin with the raw amino-acid sequence, 429 residues long: MPIIEQVGAREILDSRGNPTVEVELALTDGTFARAAVPSGASTGEHEAVELRDGGSRYGGKGVDKAVQAVLDDIAPAVIGMSADDQRLIDQALLDLDGTPDKSRLGANAILGVSLAVSKAAAESAGLPLFRYLGGPNAHILPVPMMNILNGGAHADTGVDVQEFMVAPIGAPSFKEALRWGAEVYHSLKSVLKKQGLSTGLGDEGGFAPDVAGTKAALDLISSAIEAAGFKLGTDVTLALDVAATEFYTEGTGYSFEKETRTAEQMAEFYASLLDAYPLVSIEDPLSEDDWDGWVSLTTQIGDRVQLVGDDLFVTNPERLEEGIERGAANALLVKVNQIGTLTETLDAVALAHNSGYRTMMSHRSGETEDTTIADLAVAVGSGQIKTGAPARSERVAKYNQLLRIEETLGDAARYAGDLAFPRFALETK.

Q162 is a binding site for (2R)-2-phosphoglycerate. The Proton donor role is filled by E204. Mg(2+) is bound by residues D241, E283, and D310. (2R)-2-phosphoglycerate is bound by residues K335, R364, S365, and K386. K335 acts as the Proton acceptor in catalysis.

The protein belongs to the enolase family. Requires Mg(2+) as cofactor.

The protein localises to the cytoplasm. The protein resides in the secreted. Its subcellular location is the cell surface. The catalysed reaction is (2R)-2-phosphoglycerate = phosphoenolpyruvate + H2O. It functions in the pathway carbohydrate degradation; glycolysis; pyruvate from D-glyceraldehyde 3-phosphate: step 4/5. Catalyzes the reversible conversion of 2-phosphoglycerate (2-PG) into phosphoenolpyruvate (PEP). It is essential for the degradation of carbohydrates via glycolysis. The sequence is that of Enolase from Mycobacterium sp. (strain JLS).